Here is a 147-residue protein sequence, read N- to C-terminus: Cystatin-9-like (147 aa).

The signal sequence occupies residues 1–28 (MLGLPWKGGLSWALLLLLLGSQILLIYA). A disulfide bridge links Cys-98 with Cys-108. N-linked (GlcNAc...) asparagine glycosylation is found at Asn-117 and Asn-139. Cys-122 and Cys-142 are joined by a disulfide.

Belongs to the cystatin family. In terms of tissue distribution, specifically expressed in testis.

The protein resides in the secreted. The polypeptide is Cystatin-9-like (CST9L) (Homo sapiens (Human)).